The sequence spans 393 residues: 2,3,4,5-tetrahydropyridine-2,6-dicarboxylate N-succinyltransferase (393 aa).

The active-site Acyl-anhydride intermediate is the E261. Succinyl-CoA contacts are provided by residues R263, G278, S281, A304, 319–320 (DA), G327, K356, and 369–372 (RQDS).

It belongs to the type 2 tetrahydrodipicolinate N-succinyltransferase family. As to quaternary structure, homotrimer.

Its subcellular location is the cytoplasm. It catalyses the reaction (S)-2,3,4,5-tetrahydrodipicolinate + succinyl-CoA + H2O = (S)-2-succinylamino-6-oxoheptanedioate + CoA. It functions in the pathway amino-acid biosynthesis; L-lysine biosynthesis via DAP pathway; LL-2,6-diaminopimelate from (S)-tetrahydrodipicolinate (succinylase route): step 1/3. In terms of biological role, catalyzes the conversion of the cyclic tetrahydrodipicolinate (THDP) into the acyclic N-succinyl-L-2-amino-6-oxopimelate using succinyl-CoA. In Nitratiruptor sp. (strain SB155-2), this protein is 2,3,4,5-tetrahydropyridine-2,6-dicarboxylate N-succinyltransferase.